A 138-amino-acid chain; its full sequence is MVIIKKTHNSFSLKHRHCNHTLKFGRLGLKILSFSKITENQFNLIERLSLKFLKNLSGNKKLIKIWSLVPFNLTLTKLSSEARMGKGKGAVYSRAFFLRPGSILFEFEGVSKHQLTQISSILRKKTSFRIVEVQLPSK.

The protein belongs to the universal ribosomal protein uL16 family.

Its subcellular location is the mitochondrion. This Chondrus crispus (Carrageen Irish moss) protein is Large ribosomal subunit protein uL16m (RPL16).